The primary structure comprises 141 residues: Ribosome-binding factor A (141 aa).

Residues 120–141 form a disordered region; that stretch reads DEALRAQSAGARPAGDEDPYKP.

The protein belongs to the RbfA family. Monomer. Binds 30S ribosomal subunits, but not 50S ribosomal subunits or 70S ribosomes.

It localises to the cytoplasm. Functionally, one of several proteins that assist in the late maturation steps of the functional core of the 30S ribosomal subunit. Associates with free 30S ribosomal subunits (but not with 30S subunits that are part of 70S ribosomes or polysomes). Required for efficient processing of 16S rRNA. May interact with the 5'-terminal helix region of 16S rRNA. The chain is Ribosome-binding factor A from Corynebacterium jeikeium (strain K411).